The primary structure comprises 290 residues: Cilia- and flagella-associated protein 298 (290 aa).

Phosphotyrosine is present on tyrosine 264.

It belongs to the CFAP298 family. As to quaternary structure, interacts with ZMYND10.

The protein resides in the cytoplasm. The protein localises to the cytoskeleton. It localises to the cilium basal body. Its function is as follows. Plays a role in motile cilium function, possibly by acting on outer dynein arm assembly. Seems to be important for initiation rather than maintenance of cilium motility. Required for correct positioning of the cilium at the apical cell surface, suggesting an additional role in the planar cell polarity (PCP) pathway. May suppress canonical Wnt signaling activity. The protein is Cilia- and flagella-associated protein 298 of Homo sapiens (Human).